The following is a 1018-amino-acid chain: Serine/threonine-protein phosphatase BSL2 (1018 aa).

The segment at 1–75 (MDEDSSMVAD…AAAVVGQEQQ (75 aa)) is disordered. The span at 41–57 (SPPPEGGSVPTPPPSDP) shows a compositional bias: pro residues. Positions 63–75 (QQQAAAVVGQEQQ) are enriched in low complexity. 5 Kelch repeats span residues 149 to 195 (TSAG…VATA), 253 to 301 (YLMA…TASA), 306 to 356 (LLLL…VFVN), 362 to 409 (SGGA…DAAG), and 430 to 479 (LIFI…RLPG). A disordered region spans residues 569–590 (DRDCGAEATPSGKPTFSLIKPD). S627 is modified (phosphoserine). Mn(2+) contacts are provided by D720, H722, D754, and N786. H787 acts as the Proton donor in catalysis. The Mn(2+) site is built by H839 and H918. The residue at position 975 (S975) is a Phosphoserine. Residues 994 to 1011 (ANRPATPTRGRPQNSNDR) are compositionally biased toward polar residues. The interval 994-1018 (ANRPATPTRGRPQNSNDRGGSLAWM) is disordered.

The protein belongs to the PPP phosphatase family. BSU subfamily. Interacts with BSK8. Mn(2+) is required as a cofactor. As to expression, expressed throughout the plant, with a higher level in younger parts.

It localises to the cytoplasm. It is found in the cell membrane. Its subcellular location is the nucleus. The enzyme catalyses O-phospho-L-seryl-[protein] + H2O = L-seryl-[protein] + phosphate. It catalyses the reaction O-phospho-L-threonyl-[protein] + H2O = L-threonyl-[protein] + phosphate. Its function is as follows. Phosphatase involved in elongation process, probably by acting as a regulator of brassinolide signaling. The chain is Serine/threonine-protein phosphatase BSL2 (BSL2) from Arabidopsis thaliana (Mouse-ear cress).